The following is a 336-amino-acid chain: Isopentenyl-diphosphate delta-isomerase (336 aa).

5-6 (RK) contributes to the substrate binding site. FMN-binding positions include 60–62 (AMT), Ser-90, and Asn-117. Residue Gln-147 participates in substrate binding. Residue Glu-148 coordinates Mg(2+). FMN-binding positions include Lys-179, Ser-204, Thr-209, 253–255 (GVR), and 274–275 (SR).

This sequence belongs to the IPP isomerase type 2 family. As to quaternary structure, homooctamer. Dimer of tetramers. FMN is required as a cofactor. NADPH serves as cofactor. Requires Mg(2+) as cofactor.

The protein localises to the cytoplasm. It catalyses the reaction isopentenyl diphosphate = dimethylallyl diphosphate. Its function is as follows. Involved in the biosynthesis of isoprenoids. Catalyzes the 1,3-allylic rearrangement of the homoallylic substrate isopentenyl (IPP) to its allylic isomer, dimethylallyl diphosphate (DMAPP). This chain is Isopentenyl-diphosphate delta-isomerase, found in Streptococcus pneumoniae (strain 70585).